A 389-amino-acid polypeptide reads, in one-letter code: S-adenosylmethionine synthase (389 aa).

His15 provides a ligand contact to ATP. Residue Asp17 participates in Mg(2+) binding. A K(+)-binding site is contributed by Glu43. Glu56 and Gln99 together coordinate L-methionine. Residues 99–109 (QSPDIAQGVNE) are flexible loop. ATP is bound by residues 166 to 168 (DAK), 234 to 235 (RF), Asp243, 249 to 250 (RK), Ala266, and Lys270. Asp243 contacts L-methionine. Residue Lys274 participates in L-methionine binding.

The protein belongs to the AdoMet synthase family. In terms of assembly, homotetramer; dimer of dimers. Mg(2+) serves as cofactor. It depends on K(+) as a cofactor.

The protein resides in the cytoplasm. The catalysed reaction is L-methionine + ATP + H2O = S-adenosyl-L-methionine + phosphate + diphosphate. Its pathway is amino-acid biosynthesis; S-adenosyl-L-methionine biosynthesis; S-adenosyl-L-methionine from L-methionine: step 1/1. Functionally, catalyzes the formation of S-adenosylmethionine (AdoMet) from methionine and ATP. The overall synthetic reaction is composed of two sequential steps, AdoMet formation and the subsequent tripolyphosphate hydrolysis which occurs prior to release of AdoMet from the enzyme. This Laribacter hongkongensis (strain HLHK9) protein is S-adenosylmethionine synthase.